Reading from the N-terminus, the 952-residue chain is Alpha-L-rhamnosidase (952 aa).

The first 21 residues, 1–21 (MKYNKLLFSLLLLAVFCFSCK), serve as a signal peptide directing secretion. Residues Asp-520, 524–525 (RE), Asp-532, and Trp-594 contribute to the alpha-L-rhamnose site. Glu-525 acts as the Proton donor in catalysis. The active-site Proton acceptor is Glu-809. His-826 is an alpha-L-rhamnose binding site.

Belongs to the glycosyl hydrolase 78 family.

The protein localises to the cell membrane. The catalysed reaction is Hydrolysis of terminal non-reducing alpha-L-rhamnose residues in alpha-L-rhamnosides.. Alpha-L-rhamnosidase that may be involved in ulvan degradation. Ulvan is the main polysaccharide component of the Ulvales (green seaweed) cell wall. It is composed of disaccharide building blocks comprising 3-sulfated rhamnose (Rha3S) linked to D-glucuronic acid (GlcA), L-iduronic acid (IduA), or D-xylose (Xyl). The protein is Alpha-L-rhamnosidase of Formosa agariphila (strain DSM 15362 / KCTC 12365 / LMG 23005 / KMM 3901 / M-2Alg 35-1).